We begin with the raw amino-acid sequence, 172 residues long: uncharacterized protein (172 aa).

This is an uncharacterized protein from Saccharomyces cerevisiae (strain ATCC 204508 / S288c) (Baker's yeast).